A 762-amino-acid chain; its full sequence is N,N-dimethylformamidase beta subunit (762 aa).

Heterotetramer of two DmfA1 (alpha) and two DmfA2 (beta) subunits.

The enzyme catalyses N,N-dimethylformamide + H2O = dimethylamine + formate. With respect to regulation, activity is slightly inhibited by Mg(2+) and Mn(2+), and slightly increased by Cu(2+). Activity is slightly inhibited by the chelating agents 8-hydroxyquinoline, ethylenediaminetetraacetate, o-phenanthroline and 2,2'-bipyridyl. Hydrolyzes N,N-dimethylformamide, and to a lesser extent N,N-dimethylacetamide and N,N-diethylacetamide. Has no activity against the substituted amides N-methylformamide, N-ethylformamide, N-ethylformamide and N-methylacetamide or the unsubstituted amides formamide, nicotinamide, acetoamide, benzamide, acetamide and acrylamide. The protein is N,N-dimethylformamidase beta subunit of Alcaligenes sp.